The chain runs to 484 residues: Probable endopeptidase p60 (484 aa).

A signal peptide spans 1 to 27 (MNMKKATIAATAGIAVTAFAAPTIASA). The LysM 1 domain maps to 28-71 (STVVVEAGDTLWGIAQSKGTTVDAIKKANNLTTDKIVPGQKLQV). In terms of domain architecture, SH3b spans 80–144 (KTEKSVSATW…VNGKYLTDKA (65 aa)). Positions 150 to 192 (APTQEVKKETTTQQAAPAAETKTEVKQTTQATTPAPKVAETKE) are disordered. The segment covering 160-169 (TTQQAAPAAE) has biased composition (low complexity). The LysM 2 domain occupies 201-244 (TTHAVKSGDTIWALSVKYGVSVQDIMSWNNLSSSSIYVGQKLAI). A disordered region spans residues 254–367 (KAEVKTEAPA…QGSSNNNSNS (114 aa)). Composition is skewed to low complexity over residues 273–282 (KENTNTNTAT) and 289–367 (ATQQ…NSNS). A 19 X 2 AA tandem repeats of T-N region spans residues 311-355 (TNTNANKTNTNTNTNTNTNNTNTNTPSKNTNTNSNTNTNTNSNTN). Positions 366–484 (NSSASAIIAE…GKYLVGFGRV (119 aa)) constitute a NlpC/P60 domain. The Nucleophile role is filled by Cys396. His446 acts as the Proton acceptor in catalysis. Asn458 is an active-site residue.

The protein belongs to the peptidase C40 family.

It localises to the cell surface. Its subcellular location is the secreted. Its function is as follows. This major extracellular protein may be involved in the invasion of non-professional phagocytic cells by Listeria. The polypeptide is Probable endopeptidase p60 (iap) (Listeria monocytogenes serovar 1/2a (strain ATCC BAA-679 / EGD-e)).